The following is an 87-amino-acid chain: Cell division protein FtsL (87 aa).

Residues M1–F6 lie on the Cytoplasmic side of the membrane. The chain crosses the membrane as a helical span at residues F7 to Q23. The Periplasmic portion of the chain corresponds to N24–R87. A coiled-coil region spans residues T31–N71. The segment at E68 to R87 is disordered.

This sequence belongs to the FtsL family. Part of a complex composed of FtsB, FtsL and FtsQ.

The protein localises to the cell inner membrane. Its function is as follows. Essential cell division protein. May link together the upstream cell division proteins, which are predominantly cytoplasmic, with the downstream cell division proteins, which are predominantly periplasmic. This chain is Cell division protein FtsL, found in Neisseria gonorrhoeae (strain ATCC 700825 / FA 1090).